Consider the following 253-residue polypeptide: Imidazole glycerol phosphate synthase subunit HisF (253 aa).

Active-site residues include D11 and D130.

This sequence belongs to the HisA/HisF family. In terms of assembly, heterodimer of HisH and HisF.

It localises to the cytoplasm. It catalyses the reaction 5-[(5-phospho-1-deoxy-D-ribulos-1-ylimino)methylamino]-1-(5-phospho-beta-D-ribosyl)imidazole-4-carboxamide + L-glutamine = D-erythro-1-(imidazol-4-yl)glycerol 3-phosphate + 5-amino-1-(5-phospho-beta-D-ribosyl)imidazole-4-carboxamide + L-glutamate + H(+). The protein operates within amino-acid biosynthesis; L-histidine biosynthesis; L-histidine from 5-phospho-alpha-D-ribose 1-diphosphate: step 5/9. Functionally, IGPS catalyzes the conversion of PRFAR and glutamine to IGP, AICAR and glutamate. The HisF subunit catalyzes the cyclization activity that produces IGP and AICAR from PRFAR using the ammonia provided by the HisH subunit. This is Imidazole glycerol phosphate synthase subunit HisF from Geotalea uraniireducens (strain Rf4) (Geobacter uraniireducens).